Consider the following 538-residue polypeptide: Dihomomethionine N-hydroxylase (538 aa).

The helical transmembrane segment at 8–28 (LPYPFHILLVFILSMASITLL) threads the bilayer.

This sequence belongs to the cytochrome P450 family. Heme is required as a cofactor. In terms of tissue distribution, highly expressed in cotyledons, leaves, stems and siliques. Detected in flowers and lateral roots, but not in the main root. Expressed only in the vascular bundles in apical plant parts.

Its subcellular location is the endoplasmic reticulum membrane. The catalysed reaction is an L-polyhomomethionine + 2 reduced [NADPH--hemoprotein reductase] + 2 O2 = an (E)-omega-(methylsulfanyl)-alkanal oxime + 2 oxidized [NADPH--hemoprotein reductase] + CO2 + 3 H2O + 2 H(+). It carries out the reaction L-dihomomethionine + 2 reduced [NADPH--hemoprotein reductase] + 2 O2 = (E)-5-(methylsulfanyl)pentanal oxime + 2 oxidized [NADPH--hemoprotein reductase] + CO2 + 3 H2O + 2 H(+). It catalyses the reaction L-trihomomethionine + 2 reduced [NADPH--hemoprotein reductase] + 2 O2 = (E)-6-(methylsulfanyl)hexanal oxime + 2 oxidized [NADPH--hemoprotein reductase] + CO2 + 3 H2O + 2 H(+). Its function is as follows. Catalyzes the conversion of the short chain elongated methionines di-, tri-, and tetrahomomethionine to their respective aldoximes 5-methylthiopentanaldoxime, 6-methylthiohexanaldoxime, and 7-methylheptanaldoxime. The chain is Dihomomethionine N-hydroxylase (CYP79F1) from Arabidopsis thaliana (Mouse-ear cress).